Reading from the N-terminus, the 152-residue chain is uncharacterized protein (152 aa).

The protein belongs to the antirestriction protein family.

This is an uncharacterized protein from Escherichia coli (strain K12).